Reading from the N-terminus, the 321-residue chain is Ubiquitin-conjugating enzyme E2 U (321 aa).

One can recognise a UBC core domain in the interval 4 to 153 (RAYLLLHRDF…LRLFNRPLQM (150 aa)). The Glycyl thioester intermediate role is filled by C89. The interval 285–321 (WKSDTSLYENDTDEPREEEVEDLISWTNTLNTNTSED) is disordered. A compositionally biased stretch (acidic residues) spans 294–306 (NDTDEPREEEVED). Residues 309–321 (SWTNTLNTNTSED) are compositionally biased toward polar residues.

It belongs to the ubiquitin-conjugating enzyme family. Autoubiquitinated in vitro in the presence of UBR5.

The catalysed reaction is S-ubiquitinyl-[E1 ubiquitin-activating enzyme]-L-cysteine + [E2 ubiquitin-conjugating enzyme]-L-cysteine = [E1 ubiquitin-activating enzyme]-L-cysteine + S-ubiquitinyl-[E2 ubiquitin-conjugating enzyme]-L-cysteine.. Its pathway is protein modification; protein ubiquitination. Catalyzes the covalent attachment of ubiquitin to other proteins. This Homo sapiens (Human) protein is Ubiquitin-conjugating enzyme E2 U (UBE2U).